A 367-amino-acid polypeptide reads, in one-letter code: Zinc finger CCCH domain-containing protein 56 (367 aa).

A disordered region spans residues 38–80 (YNSQWNADGGGGGSSRAGSEQPPPGKKSRGGGGGEGGGNTSKS). Over residues 67–76 (GGGGGEGGGN) the composition is skewed to gly residues. C3H1-type zinc fingers lie at residues 87-114 (FFKT…HGME), 169-197 (AYKG…HDEQ), and 245-273 (NWKT…HGAA).

This chain is Zinc finger CCCH domain-containing protein 56, found in Oryza sativa subsp. japonica (Rice).